The sequence spans 310 residues: Methionyl-tRNA formyltransferase (310 aa).

A (6S)-5,6,7,8-tetrahydrofolate-binding site is contributed by 109–112 (SLLP).

This sequence belongs to the Fmt family.

It catalyses the reaction L-methionyl-tRNA(fMet) + (6R)-10-formyltetrahydrofolate = N-formyl-L-methionyl-tRNA(fMet) + (6S)-5,6,7,8-tetrahydrofolate + H(+). Functionally, attaches a formyl group to the free amino group of methionyl-tRNA(fMet). The formyl group appears to play a dual role in the initiator identity of N-formylmethionyl-tRNA by promoting its recognition by IF2 and preventing the misappropriation of this tRNA by the elongation apparatus. This is Methionyl-tRNA formyltransferase from Staphylococcus epidermidis (strain ATCC 35984 / DSM 28319 / BCRC 17069 / CCUG 31568 / BM 3577 / RP62A).